The following is a 13041-amino-acid chain: Nonribosomal peptide synthetase kk1B (13041 aa).

The interval 267–663 (ANRVVDTPQK…GRRDSQIKIR (397 aa)) is adenylation 1. Residues 788–864 (ASLMTEGITL…GLINVMQQSS (77 aa)) form the Carrier 1 domain. Ser-825 bears the O-(pantetheine 4'-phosphoryl)serine mark. The tract at residues 882-1313 (SFAQGRLWFL…TPIAHLQLTD (432 aa)) is condensation 1. Residues 1341–1736 (FQKQVAACPN…GRMDFQIKIR (396 aa)) are adenylation 2. Residues 1865–1939 (AARNEIEAVL…NLAATIKRGS (75 aa)) form the Carrier 2 domain. The residue at position 1899 (Ser-1899) is an O-(pantetheine 4'-phosphoryl)serine. The condensation 2 stretch occupies residues 1957-2383 (SFAQGRLWFL…DQPQTPLALL (427 aa)). The adenylation 3 stretch occupies residues 2418–2812 (QVAASPNATA…GRMDQQIKIR (395 aa)). The methyltransferase (M) domain 1 stretch occupies residues 2891–3023 (VGNDFMGWTS…EYLSKVLYAL (133 aa)). The region spanning 3353-3427 (GARNETEAVL…DLAASIRRGS (75 aa)) is the Carrier 3 domain. The residue at position 3387 (Ser-3387) is an O-(pantetheine 4'-phosphoryl)serine. The tract at residues 3445-3869 (SFAQGRLWFL…DQPQIPIAVL (425 aa)) is condensation 3. The adenylation 4 stretch occupies residues 3901-4300 (FRAQVVACPD…GRMDQQVKIR (400 aa)). Residues 4412–4486 (PPRNEIETIL…NLAAAVQRGS (75 aa)) enclose the Carrier 4 domain. Position 4446 is an O-(pantetheine 4'-phosphoryl)serine (Ser-4446). Positions 4504–4935 (SFAQGRLWFL…TPIAALSLTD (432 aa)) are condensation 4. Residues 4963–5362 (FREQVATYPD…GRMDRQLKIR (400 aa)) form an adenylation 5 region. The methyltransferase (M) domain 2 stretch occupies residues 5430–5567 (TYAELDTLVK…VAQYFPTPEY (138 aa)). The region spanning 5897 to 5971 (QPRNEVEAVL…DLAAAIQRGS (75 aa)) is the Carrier 5 domain. The residue at position 5931 (Ser-5931) is an O-(pantetheine 4'-phosphoryl)serine. Residues 5989–6416 (SYAQGRLWFL…DQPQTPLALL (428 aa)) form a condensation 5 region. Positions 6451 to 6845 (QVAASPNATA…GRMDQQIKIR (395 aa)) are adenylation 6. A methyltransferase (M) domain 3 region spans residues 6924–7056 (VGNDFMGWTS…EYLSKVLYAL (133 aa)). Residues 7386–7460 (GARNEIEAAL…DLAGAVQRGS (75 aa)) form the Carrier 6 domain. Ser-7420 bears the O-(pantetheine 4'-phosphoryl)serine mark. The condensation 6 stretch occupies residues 7478-7901 (SFAQGRLWFL…GLETPRLPIS (424 aa)). Residues 7934–8335 (FRTQVAASPD…GRMDRQLKIR (402 aa)) are adenylation 7. The interval 8404–8540 (YAEIEEIDSS…AQYFPSPEYL (137 aa)) is methyltransferase (M) domain 4. Residues 8871-8945 (GPRNEIEALL…DLAASIQRGS (75 aa)) form the Carrier 7 domain. Residue Ser-8905 is modified to O-(pantetheine 4'-phosphoryl)serine. Residues 8963-9392 (SFAQGRLWFL…PKTPIAVLPL (430 aa)) form a condensation 7 region. Positions 9422–9822 (FRQQVAARPD…SRMDQQVKIR (401 aa)) are adenylation 8. Residues 9943–10017 (PPTNDMERIL…DLASTIKQDS (75 aa)) enclose the Carrier 8 domain. Ser-9977 bears the O-(pantetheine 4'-phosphoryl)serine mark. Residues 10035–10462 (SFAQGRLWFL…ETPQTPLAVL (428 aa)) are condensation 8. Residues 10494–10892 (FRAQVAACPD…GRMDQQIKIR (399 aa)) form an adenylation 9 region. The methyltransferase (M) domain 5 stretch occupies residues 10959 to 11105 (IYAEIEEIDS…EYLADVVGAL (147 aa)). The Carrier 9 domain maps to 11428–11502 (SARNEVEAVL…DLAASIERNS (75 aa)). Ser-11462 bears the O-(pantetheine 4'-phosphoryl)serine mark. The tract at residues 11520-11945 (SFAQGRLWFL…EQPQTPIAVL (426 aa)) is condensation 9. Residues 11977 to 12377 (FRDQVAANPR…GRMDQQIKIR (401 aa)) form an adenylation 10 region. The Carrier 10 domain occupies 12495–12569 (VPRNELEASL…DLALKVSSYI (75 aa)). An O-(pantetheine 4'-phosphoryl)serine modification is found at Ser-12529. A condensation 10 region spans residues 12647–13032 (FPANADCDKI…RMHEEFCDII (386 aa)).

It belongs to the NRP synthetase family.

It functions in the pathway secondary metabolite biosynthesis. Functionally, nonribosomal peptide synthetase; part of the gene cluster that mediates the biosynthesis of KK-1, a novel cyclic depsipeptide with 10 residues which is a promising active compound with high activity against many plant pathogens, especially Botrytis cinerea. The nonribosomal peptide synthetase (NRPS) kk1B catalyzes the elongation and cyclization of the decapeptide chain composed of 1 D-lactic acid residue (D-Lac), 1 pipecolic acid residue (Pip), 1 aspartic acid residue (Asp), 1 isoleucine residue (Ile), 1 glycine residue (Gly), 1 tyrosine residue (Tyr) and 4 valine residues (Val). The Asp, Ile and 3 Val residues are N-methylated by the 5 methyltransferase domains from the NRPS (found in modules 3, 5, 6, 7 and 9), whereas the Tyr residue is O-methylated by the cluster encoded O-methyltransferase kk1A. Cyclization with the hydroxy group of the D-lactic acid as a nucleophile is presumed to occur in the final module of NRPS, resulting in the formation of the depsipeptide ester bond through macrocyclization by the C-terminal C domain. The thioesterase kk1J is likely to be involved in the corrective mechanism of peptide chain synthesis. The D-lactate dehydrogenase kk1H is involved in the synthesis of D-lactic acid from pyruvic acid, which is recognized by the A domain of the first kk1B module. The pyrroline-5-carboxylate reductase kk1I is involved in the synthesis of the L-pipecolic acid residue of KK-1 from delta-1-pyrroline-5-carboxylate (P5C), a metabolic intermediate of lysine. It is still unclear how kk1C and kk1D are involved in the production of KK-1. In Curvularia clavata, this protein is Nonribosomal peptide synthetase kk1B.